A 390-amino-acid polypeptide reads, in one-letter code: S-adenosylmethionine synthase 2 (390 aa).

Position 9 (E9) interacts with Mg(2+). H15 serves as a coordination point for ATP. E43 lines the K(+) pocket. 2 residues coordinate L-methionine: E56 and Q99. ATP-binding positions include 167–169 (DGK), 235–238 (SGRF), D246, 252–253 (RK), A269, K273, and K277. D246 is an L-methionine binding site. K277 provides a ligand contact to L-methionine.

The protein belongs to the AdoMet synthase family. Homotetramer. It depends on Mn(2+) as a cofactor. The cofactor is Mg(2+). Co(2+) serves as cofactor. K(+) is required as a cofactor.

It localises to the cytoplasm. It catalyses the reaction L-methionine + ATP + H2O = S-adenosyl-L-methionine + phosphate + diphosphate. It functions in the pathway amino-acid biosynthesis; S-adenosyl-L-methionine biosynthesis; S-adenosyl-L-methionine from L-methionine: step 1/1. In terms of biological role, catalyzes the formation of S-adenosylmethionine from methionine and ATP. The reaction comprises two steps that are both catalyzed by the same enzyme: formation of S-adenosylmethionine (AdoMet) and triphosphate, and subsequent hydrolysis of the triphosphate. This is S-adenosylmethionine synthase 2 (SAM2) from Actinidia chinensis var. chinensis (Chinese soft-hair kiwi).